A 361-amino-acid chain; its full sequence is DNA replication and repair protein RecF (361 aa).

30–37 (GDNAQGKT) provides a ligand contact to ATP.

It belongs to the RecF family.

It is found in the cytoplasm. In terms of biological role, the RecF protein is involved in DNA metabolism; it is required for DNA replication and normal SOS inducibility. RecF binds preferentially to single-stranded, linear DNA. It also seems to bind ATP. In Clostridium perfringens (strain ATCC 13124 / DSM 756 / JCM 1290 / NCIMB 6125 / NCTC 8237 / Type A), this protein is DNA replication and repair protein RecF.